The following is a 365-amino-acid chain: MEIDEEEPMVFLDRTTRATRGKRMTKLLDDEVEEDEQFWNQEALKEEEHDDEYEAEREVADEFDSDFNDDEPEPDAVAVNEKELRDLPKKRLIYPGKTASKKKKKKTKVVSQLEYIPGDEKPGEELGNKEQEEKEENEAQEDMEGEKVIRKSTRTSVVVRQAERDALRAAIQATTKPIQRKKVGEEKRMTQEEMLLEAAQTEIMNLRNLERVLAREEEVKKKAIVHKAVYKGPQIRYHSKDGCNYLEFCNGASFNSELSTKSVPYPEKAVCVITGLPAKYRDPKTGLPYATRDAFKAIRERFMDEHDGLRKKMEMGDLFDTLVAKGFATKQKRTKIPKSNKSFSLRSSARFLSSESEEESEEDSD.

Disordered regions lie at residues 43 to 83 (ALKE…NEKE) and 95 to 147 (PGKT…EGEK). Residues 48–74 (EHDDEYEAEREVADEFDSDFNDDEPEP) are compositionally biased toward acidic residues. Residues 99–108 (ASKKKKKKTK) show a composition bias toward basic residues. Over residues 118–132 (GDEKPGEELGNKEQE) the composition is skewed to basic and acidic residues. Coiled coils occupy residues 123–150 (GEEL…KVIR) and 184–225 (GEEK…KAIV). Residues 133–144 (EKEENEAQEDME) are compositionally biased toward acidic residues. Residues 333–365 (RTKIPKSNKSFSLRSSARFLSSESEEESEEDSD) form a disordered region. Over residues 342–354 (SFSLRSSARFLSS) the composition is skewed to low complexity. Acidic residues predominate over residues 355-365 (ESEEESEEDSD).

This sequence belongs to the VPS72/YL1 family. In terms of assembly, component of the SWR1 chromatin-remodeling complex composed of at least ARP6/ESD1/SUF3, PIE1, SWC6, SWC2 and H2AZs (HTA8, HTA9, HTA11). Interacts directly with SWC6 and H2AZs, but not with ARP6.

Its function is as follows. Component of the SWR1 complex which mediates the ATP-dependent exchange of histone H2A for the H2A variant H2A.F/Z leading to transcriptional regulation of selected genes (e.g. FLC) by chromatin remodeling. The sequence is that of SWR1 complex subunit 2 (SWC2) from Arabidopsis thaliana (Mouse-ear cress).